The sequence spans 419 residues: Glutamyl-tRNA reductase (419 aa).

Substrate-binding positions include 49–52 (TCNR), serine 107, 112–114 (EPQ), and glutamine 118. Residue cysteine 50 is the Nucleophile of the active site. 187 to 192 (GAGETI) provides a ligand contact to NADP(+).

The protein belongs to the glutamyl-tRNA reductase family. Homodimer.

It carries out the reaction (S)-4-amino-5-oxopentanoate + tRNA(Glu) + NADP(+) = L-glutamyl-tRNA(Glu) + NADPH + H(+). It functions in the pathway porphyrin-containing compound metabolism; protoporphyrin-IX biosynthesis; 5-aminolevulinate from L-glutamyl-tRNA(Glu): step 1/2. In terms of biological role, catalyzes the NADPH-dependent reduction of glutamyl-tRNA(Glu) to glutamate 1-semialdehyde (GSA). This is Glutamyl-tRNA reductase from Vibrio vulnificus (strain CMCP6).